A 247-amino-acid chain; its full sequence is Transmembrane protein 33 (247 aa).

An N-acetylalanine modification is found at Ala-2. Over 2 to 31 the chain is Lumenal; that stretch reads ADTTPNGPQGAGAVQFMMTNKLDTAMWLSR. The helical transmembrane segment at 32 to 52 threads the bilayer; it reads LFTVYCSALFVLPLLGLHEAA. Over 53–100 the chain is Cytoplasmic; the sequence is SFYQRALLANALTSALRLHQRLPHFQLSRAFLAQALLEDSCHYLLYSL. Residues 101–121 form a helical membrane-spanning segment; the sequence is IFVNSYPVTMSIFPVLLFSLL. The Lumenal segment spans residues 122–155; it reads HAATYTKKVLDARGSNSLPLLRSVLDKLSANQQN. A helical membrane pass occupies residues 156 to 176; it reads ILKFIACNEIFLMPATVFMLF. The Cytoplasmic segment spans residues 177-247; that stretch reads SGQGSLLQPF…FISRLAPTVP (71 aa).

This sequence belongs to the PER33/POM33 family. As to quaternary structure, interacts with EIF2AK3. Interacts with ARL6IP1, isoform RTN1-A of RTN1, isoform RTN2-B of RTN2, isoform 3 of RTN3 and isoform 3 of RTN4. Interacts with RNF5. Interacts with RNF26. Interacts with PKD2. In terms of tissue distribution, prostate cancer and several cancer cell lines (at protein level). Widely expressed. Expressed at higher levels in endocrine-resistant breast cancer cells as compared to endocrine-sensitive breast cancer cells. Expressed at higher levels in early recurrence breast cancer tissues as compared to non-recurrent breast tumors.

It localises to the endoplasmic reticulum membrane. The protein resides in the melanosome. Its subcellular location is the nucleus envelope. Functionally, acts as a regulator of the tubular endoplasmic reticulum (ER) network by modulating intracellular calcium homeostasis. Mechanistically, stimulates PKD2 calcium-dependent activity. Suppresses the RTN3/4-induced formation of the ER tubules. Positively regulates PERK-mediated and IRE1-mediated unfolded protein response signaling. Plays an essential role in VEGF-mediated release of Ca(2+) from ER stores during angiogenesis. Also plays a role in the modulation of innate immune signaling through the cGAS-STING pathway by interacting with RNF26. Participates in lipid metabolism by acting as a downstream effector of the pyruvate kinase/PKM. Forms a complex with RNF5 to facilitate polyubiquitination and subsequent degradation of SCAP on the ER membrane. This Homo sapiens (Human) protein is Transmembrane protein 33 (TMEM33).